Here is a 486-residue protein sequence, read N- to C-terminus: ATP synthase subunit beta (486 aa).

170 to 177 (GGAGVGKT) is an ATP binding site.

This sequence belongs to the ATPase alpha/beta chains family. As to quaternary structure, F-type ATPases have 2 components, CF(1) - the catalytic core - and CF(0) - the membrane proton channel. CF(1) has five subunits: alpha(3), beta(3), gamma(1), delta(1), epsilon(1). CF(0) has three main subunits: a(1), b(2) and c(9-12). The alpha and beta chains form an alternating ring which encloses part of the gamma chain. CF(1) is attached to CF(0) by a central stalk formed by the gamma and epsilon chains, while a peripheral stalk is formed by the delta and b chains.

The protein resides in the cell membrane. It catalyses the reaction ATP + H2O + 4 H(+)(in) = ADP + phosphate + 5 H(+)(out). Functionally, produces ATP from ADP in the presence of a proton gradient across the membrane. The catalytic sites are hosted primarily by the beta subunits. The chain is ATP synthase subunit beta from Kineococcus radiotolerans (strain ATCC BAA-149 / DSM 14245 / SRS30216).